Consider the following 199-residue polypeptide: Putative rhomboid protease YdcA (199 aa).

6 helical membrane-spanning segments follow: residues 14–34 (LYPV…FFSL), 65–85 (ILLH…FLFA), 97–117 (FLLV…VTEP), 122–142 (HVGA…MVLF), 147–167 (IGQE…LMSF), and 172–192 (INMM…FLCV). The active-site Nucleophile is Ser-126. The active-site Charge relay system is the His-177.

It belongs to the peptidase S54 family.

It is found in the cell membrane. The protein is Putative rhomboid protease YdcA (ydcA) of Bacillus subtilis (strain 168).